A 165-amino-acid chain; its full sequence is Late embryogenesis abundant protein D-113 (165 aa).

Positions 1 to 13 (MQSMKDAAASAKA) are enriched in low complexity. Disordered regions lie at residues 1–76 (MQSM…IGGT) and 92–165 (GGTG…YRSY). Positions 14–60 (GMEKAKASMQEKVDQMKTRDPNEKEMARERKEERQEDAELRKQEARH) are enriched in basic and acidic residues. The segment covering 67-76 (HVGGGGIGGT) has biased composition (gly residues). Residues 132–155 (TTGNQDFPNAASNNAGTRRNTRGG) are compositionally biased toward polar residues.

It belongs to the LEA type 1 family.

Functionally, LEA proteins are late embryonic proteins abundant in higher plant seed embryos. There are two subsets of LEA proteins (5a and 5b), the first ones are expressed when the cotyledon weight reach 80 mg and the second set are expressed above 100 mg. The function of those proteins is not known. The chain is Late embryogenesis abundant protein D-113 from Gossypium hirsutum (Upland cotton).